We begin with the raw amino-acid sequence, 266 residues long: uncharacterized protein (266 aa).

The TIR domain occupies 112–261 (LEKKIFISHS…KKWERIKAKF (150 aa)). E192 is an active-site residue.

It carries out the reaction NAD(+) + H2O = ADP-D-ribose + nicotinamide + H(+). This is an uncharacterized protein from Bacillus subtilis (strain 168).